A 1388-amino-acid chain; its full sequence is Rho-associated protein kinase 2 (1388 aa).

A disordered region spans residues 1 to 26 (MSRPPPTGKMPGAPEAAPGDGAGAGR). The Protein kinase domain maps to 92–354 (YDVVKVIGRG…VEEIKQHPFF (263 aa)). Residues 98-106 (IGRGAFGEV) and Lys-121 each bind ATP. The active-site Proton acceptor is the Asp-214. The 69-residue stretch at 357-425 (DQWNWDNIRE…FRENLLLSDS (69 aa)) folds into the AGC-kinase C-terminal domain. Positions 363 to 784 (NIRETAAPVV…LNELLKQKDV (422 aa)) are interaction with PPP1R12A. Residues 373–420 (PELSSDIDSSNFDDIEDDKGDVETFPIPKAFVGNQLPFIGFTYFRENL) form an interaction with NPM1 region. Thr-414 carries the phosphothreonine; by ROCK2 modification. Residues 439–1131 (SEESQEIQKK…QLQALHIGMD (693 aa)) adopt a coiled-coil conformation. The 77-residue stretch at 497–573 (TLRQLEREKA…LDEANALLRT (77 aa)) folds into the REM-1 domain. Residues 512–530 (NAEYQRKADHEADKKRNLE) are compositionally biased toward basic and acidic residues. The disordered stretch occupies residues 512-532 (NAEYQRKADHEADKKRNLEND). Tyr-722 bears the Phosphotyrosine; by SRC mark. Positions 979-1047 (TSDVANLANE…LAEIMNRKEP (69 aa)) constitute a RhoBD domain. Residues 979 to 1047 (TSDVANLANE…LAEIMNRKEP (69 aa)) are RHOA binding. Position 1137 is a phosphoserine (Ser-1137). In terms of domain architecture, PH spans 1150–1349 (ESRLEGWLSL…WVSRLVKKIP (200 aa)). Thr-1212 is modified (phosphothreonine). The Phorbol-ester/DAG-type zinc-finger motif lies at 1260–1315 (GHEFIPTLYHFPTNCEACMKPLWHMFKPPPALECRRCHIKCHKDHMDKKEEIIAPC). Residues 1345–1388 (VKKIPKKPPAPDPFARSSPRTSMKIQQNQSIRRPSRQLAPNKPS) form a disordered region. Phosphoserine is present on residues Ser-1362 and Ser-1374. Positions 1362-1376 (SPRTSMKIQQNQSIR) are enriched in polar residues.

Belongs to the protein kinase superfamily. AGC Ser/Thr protein kinase family. As to quaternary structure, homodimer. Interacts with IRS1. Interacts with RAF1. Interacts with RHOA (activated by GTP), RHOB and RHOC. Interacts with PPP1R12A. Interacts with EP300. Interacts with CHORDC1. Interacts with BRCA2. Interacts with NPM1; this interaction enhances ROCK2 activity. Interacts with SORL1. Interacts with PJVK. It depends on Mg(2+) as a cofactor. Autophosphorylated. Phosphorylation at Tyr-722 reduces its binding to RHOA and is crucial for focal adhesion dynamics. Dephosphorylation by PTPN11 stimulates its RHOA binding activity. Post-translationally, cleaved by granzyme B during apoptosis. This leads to constitutive activation of the kinase and membrane blebbing. Highly expressed in brain, heart, lung, liver, stomach, spleen, kidney, testis, muscle, embryo and placenta. Isoform 2 is expressed predominantly in the skeletal muscle.

It is found in the cytoplasm. The protein localises to the cell membrane. Its subcellular location is the nucleus. The protein resides in the cytoskeleton. It localises to the microtubule organizing center. It is found in the centrosome. It catalyses the reaction L-seryl-[protein] + ATP = O-phospho-L-seryl-[protein] + ADP + H(+). The enzyme catalyses L-threonyl-[protein] + ATP = O-phospho-L-threonyl-[protein] + ADP + H(+). Activated by RHOA binding. Inhibited by Y-27632. Its function is as follows. Protein kinase which is a key regulator of actin cytoskeleton and cell polarity. Involved in regulation of smooth muscle contraction, actin cytoskeleton organization, stress fiber and focal adhesion formation, neurite retraction, cell adhesion and motility via phosphorylation of ADD1, BRCA2, CNN1, EZR, DPYSL2, EP300, MSN, MYL9/MLC2, NPM1, RDX, PPP1R12A and VIM. Phosphorylates SORL1 and IRF4. Acts as a negative regulator of VEGF-induced angiogenic endothelial cell activation. Positively regulates the activation of p42/MAPK1-p44/MAPK3 and of p90RSK/RPS6KA1 during myogenic differentiation. Plays an important role in the timely initiation of centrosome duplication. Inhibits keratinocyte terminal differentiation. May regulate closure of the eyelids and ventral body wall through organization of actomyosin bundles. Plays a critical role in the regulation of spine and synaptic properties in the hippocampus. Plays a role in placental homeostasis during the perinatal period. Plays an important role in generating the circadian rhythm of the aortic myofilament Ca(2+) sensitivity and vascular contractility by modulating the myosin light chain phosphorylation. The polypeptide is Rho-associated protein kinase 2 (Rock2) (Mus musculus (Mouse)).